A 715-amino-acid polypeptide reads, in one-letter code: Phosphatidylinositol 4-phosphate 5-kinase 6 (715 aa).

Positions 1 to 13 (MSVAHADDADDYS) are enriched in basic and acidic residues. A disordered region spans residues 1 to 21 (MSVAHADDADDYSRPTGESYH). 8 MORN repeats span residues 32–54 (YTGQWRDNLPHGHGKYLWTDGCM), 55–77 (YVGDWHRGKTMGKGRFSWPSGAT), 78–100 (YEGDFKNGYMDGKGTYIDSSGDL), 101–123 (YRGSWVMNLRHGQGTKSYVNGDC), 124–146 (YDGEWRRGLQDGHGRYQWKNENH), 147–169 (YIGQWKNGLMNGNGTMIWSNGNR), 170–192 (YDGSWEDGAPKGNGTFRWSDGSF), and 193–214 (YVGVWSKDPKEQNGTYYPSTSS). Residues 253–306 (GASEQSSSGNRTKNSERPRRRSVDGRVSNGEMELRSNGSGYLQVDDNAESTRSS) are disordered. Residues 255–264 (SEQSSSGNRT) are compositionally biased toward polar residues. Over residues 265–276 (KNSERPRRRSVD) the composition is skewed to basic and acidic residues. In terms of domain architecture, PIPK spans 321 to 711 (TISKGHKNYE…RFRDFIFRVF (391 aa)). Positions 671–692 (YDISKKLEHAYKSMQYDPTSIS) are activation loop.

It carries out the reaction a 1,2-diacyl-sn-glycero-3-phospho-(1D-myo-inositol 4-phosphate) + ATP = a 1,2-diacyl-sn-glycero-3-phospho-(1D-myo-inositol-4,5-bisphosphate) + ADP + H(+). The polypeptide is Phosphatidylinositol 4-phosphate 5-kinase 6 (PIP5K6) (Arabidopsis thaliana (Mouse-ear cress)).